A 398-amino-acid polypeptide reads, in one-letter code: Phosphoglycerate kinase (398 aa).

Substrate contacts are provided by residues 21–23 (DFN), arginine 36, 59–62 (HLGR), arginine 119, and arginine 157. Residues lysine 208, glycine 296, glutamate 327, and 354–357 (GGDS) contribute to the ATP site.

This sequence belongs to the phosphoglycerate kinase family. In terms of assembly, monomer.

It is found in the cytoplasm. It carries out the reaction (2R)-3-phosphoglycerate + ATP = (2R)-3-phospho-glyceroyl phosphate + ADP. It functions in the pathway carbohydrate degradation; glycolysis; pyruvate from D-glyceraldehyde 3-phosphate: step 2/5. In Lactococcus lactis subsp. cremoris (strain SK11), this protein is Phosphoglycerate kinase.